The chain runs to 493 residues: Proline--tRNA ligase (493 aa).

This sequence belongs to the class-II aminoacyl-tRNA synthetase family. ProS type 3 subfamily. Homodimer.

It localises to the cytoplasm. The catalysed reaction is tRNA(Pro) + L-proline + ATP = L-prolyl-tRNA(Pro) + AMP + diphosphate. Catalyzes the attachment of proline to tRNA(Pro) in a two-step reaction: proline is first activated by ATP to form Pro-AMP and then transferred to the acceptor end of tRNA(Pro). This Porphyromonas gingivalis (strain ATCC BAA-308 / W83) protein is Proline--tRNA ligase.